The sequence spans 377 residues: DAR GTPase 2, mitochondrial (377 aa).

The N-terminal 21 residues, Met-1 to Ser-21, are a transit peptide targeting the mitochondrion. The CP-type G domain maps to Ala-34–Pro-211. The short motif at Asp-55–Pro-59 is the DARXP motif element. Residues Asn-82–Glu-85, Asn-110–Ser-111, Asn-150–Ala-155, and Gly-207 contribute to the GTP site.

It belongs to the TRAFAC class YlqF/YawG GTPase family. MTG1 subfamily.

It localises to the mitochondrion. Its function is as follows. GTPase that may function in mitochondrial ribosome assembly. The chain is DAR GTPase 2, mitochondrial from Arabidopsis thaliana (Mouse-ear cress).